The primary structure comprises 212 residues: Pyridoxine/pyridoxamine 5'-phosphate oxidase (212 aa).

Residues R7 to Y10 and K65 contribute to the substrate site. Residues R60–K65, F75–T76, R81, K82, and Q104 each bind FMN. Residues Y122, R126, and S130 each contribute to the substrate site. Residues Q139 to S140 and W184 contribute to the FMN site. R190–H192 contacts substrate. R194 contacts FMN.

Belongs to the pyridoxamine 5'-phosphate oxidase family. Homodimer. FMN is required as a cofactor.

It carries out the reaction pyridoxamine 5'-phosphate + O2 + H2O = pyridoxal 5'-phosphate + H2O2 + NH4(+). The catalysed reaction is pyridoxine 5'-phosphate + O2 = pyridoxal 5'-phosphate + H2O2. The protein operates within cofactor metabolism; pyridoxal 5'-phosphate salvage; pyridoxal 5'-phosphate from pyridoxamine 5'-phosphate: step 1/1. It participates in cofactor metabolism; pyridoxal 5'-phosphate salvage; pyridoxal 5'-phosphate from pyridoxine 5'-phosphate: step 1/1. Functionally, catalyzes the oxidation of either pyridoxine 5'-phosphate (PNP) or pyridoxamine 5'-phosphate (PMP) into pyridoxal 5'-phosphate (PLP). In Alteromonas mediterranea (strain DSM 17117 / CIP 110805 / LMG 28347 / Deep ecotype), this protein is Pyridoxine/pyridoxamine 5'-phosphate oxidase.